The following is a 456-amino-acid chain: Exodeoxyribonuclease 7 large subunit (456 aa).

Belongs to the XseA family. Heterooligomer composed of large and small subunits.

It is found in the cytoplasm. It carries out the reaction Exonucleolytic cleavage in either 5'- to 3'- or 3'- to 5'-direction to yield nucleoside 5'-phosphates.. Functionally, bidirectionally degrades single-stranded DNA into large acid-insoluble oligonucleotides, which are then degraded further into small acid-soluble oligonucleotides. The polypeptide is Exodeoxyribonuclease 7 large subunit (Shigella flexneri serotype 5b (strain 8401)).